Consider the following 622-residue polypeptide: 1,4-alpha-glucan branching enzyme GlgB (622 aa).

Asp-306 functions as the Nucleophile in the catalytic mechanism. Glu-358 (proton donor) is an active-site residue. Positions 581 to 606 (YGGSNVGNRGAVHSDPVEKHGHSHSL) are disordered.

This sequence belongs to the glycosyl hydrolase 13 family. GlgB subfamily. As to quaternary structure, monomer.

The enzyme catalyses Transfers a segment of a (1-&gt;4)-alpha-D-glucan chain to a primary hydroxy group in a similar glucan chain.. Its pathway is glycan biosynthesis; glycogen biosynthesis. Catalyzes the formation of the alpha-1,6-glucosidic linkages in glycogen by scission of a 1,4-alpha-linked oligosaccharide from growing alpha-1,4-glucan chains and the subsequent attachment of the oligosaccharide to the alpha-1,6 position. The chain is 1,4-alpha-glucan branching enzyme GlgB from Salinibacter ruber (strain DSM 13855 / M31).